The following is a 482-amino-acid chain: Nuclear transcription factor Y subunit nfya-1 (482 aa).

The tract at residues 1–160 (MNGASRGDVQ…NGSYIQYNEP (160 aa)) is disordered. A compositionally biased stretch (polar residues) spans 72-93 (SSPNVQTQCHQPPVVRSQTHQA). The segment covering 94–110 (SVSQTTPTQTTPSQYTP) has biased composition (low complexity). Composition is skewed to polar residues over residues 126-135 (HVTPSQQQRI) and 144-160 (VSQS…YNEP). The short motif at 306–329 (LVNPKQFNRIMRRREMRQQLEASG) is the Subunit association domain (SAD) element. The NFYA/HAP2-type DNA-binding region spans 336 to 361 (QKYLHESRHLHALKRKRGLDGRFDNT). Residues 344–414 (HLHALKRKRG…QPKGGIVNSS (71 aa)) are disordered. Basic and acidic residues predominate over residues 353–362 (GLDGRFDNTK). A compositionally biased stretch (low complexity) spans 363–375 (TAESSSMVSSTTS).

It belongs to the NFYA/HAP2 subunit family. In terms of assembly, forms a heterotrimeric transcription factor complex (nfya-1-NF-Y complex) composed of nfya-1, nfyb-1 and nfyc-1, which binds to 5'-CCAAT-3' box motif in the promoters of its target genes. Interacts with the nfyb-1 and nfyc-1 dimer; the interaction is required for subsequent binding to the 5'-CCAAT-3' box motif in DNA. Does not interact with either nfyb-1 or nfyc-1 in their monomeric form. Interacts with mes-3. Expressed in certain parts of the gonads with high expression in fertilized oocytes in the uterus and mature oocytes from the distal to the proximal arm of the gonad, but weak expression in the syncytial ovaries and immature oocytes at the beginning of the proximal arm of the gonad. Highly expressed in the head ganglia neurons and the developing hermaphrodite vulva and male tail. Weakly expressed in most somatic cells. Not expressed in the intestine, the hypodermis, body wall muscle surrounding the pseudocoelomic space, secretory cells in the pharyngeal terminal bulb wall, in the small ganglia surrounding the pharynx and in the neurons running anteriorly to the sensory organs in the head.

The protein resides in the nucleus. Its function is as follows. Component of the sequence-specific heterotrimeric transcription factor (nfya-1-NF-Y) which specifically recognizes a 5'-CCAAT-3' box motif found in the promoters of its target genes to regulate their expression and control cellular identity in particular tissue types. In association with the components in the nfya-1-NF-Y complex, represses the expression of the T-box transcription factor tbx-2 throughout larval development, which most likely restricts its expression to certain tissues. May act to repress txb-2 expression in conjunction with tbx-2 itself, which has an autoregulatory role. With the components in this complex, negatively regulates the expression of the homeobox protein egl-5 to spatially restrict its expression in tissues such as the head. May regulate egl-5 expression in association with the mes-2-mes-3-mes-6 complex. This Caenorhabditis elegans protein is Nuclear transcription factor Y subunit nfya-1.